The chain runs to 626 residues: Trehalase (626 aa).

The next 2 membrane-spanning stretches (helical) occupy residues 20 to 40 (KLFLSSSPFNLLFSFPSFIYL) and 45 to 65 (SLFFFFFFFLCFSFTTSMLDS). Alpha,alpha-trehalose contacts are provided by arginine 224, aspartate 232, asparagine 268, arginine 277, glutamine 279, arginine 344, and glutamate 346. Active-site proton donor/acceptor residues include aspartate 380 and glutamate 580. Residues glutamate 580 and glutamate 595 each coordinate alpha,alpha-trehalose.

This sequence belongs to the glycosyl hydrolase 37 family. As to quaternary structure, forms homodimers. As to expression, highly expressed in flowers. Expressed at low levels in leaves and stems. Expressed in guard cells.

The protein localises to the cell membrane. The protein resides in the cytoplasm. Its subcellular location is the nucleus. The catalysed reaction is alpha,alpha-trehalose + H2O = alpha-D-glucose + beta-D-glucose. Its function is as follows. Involved in the regulation of trehalose content by hydrolyzing trehalose to glucose. May play a role in the regulation of abscisic acid-induced stomatal closure in response to drought stress. This Arabidopsis thaliana (Mouse-ear cress) protein is Trehalase (TRE1).